We begin with the raw amino-acid sequence, 279 residues long: Pantothenate synthetase (279 aa).

Residue 26–33 (MGNLHDGH) participates in ATP binding. His-33 (proton donor) is an active-site residue. Gln-57 contributes to the (R)-pantoate binding site. Residue Gln-57 coordinates beta-alanine. 144 to 147 (GKKD) lines the ATP pocket. Residue Gln-150 participates in (R)-pantoate binding. ATP-binding positions include Val-173 and 181–184 (LSSR).

The protein belongs to the pantothenate synthetase family. As to quaternary structure, homodimer.

The protein localises to the cytoplasm. The catalysed reaction is (R)-pantoate + beta-alanine + ATP = (R)-pantothenate + AMP + diphosphate + H(+). The protein operates within cofactor biosynthesis; (R)-pantothenate biosynthesis; (R)-pantothenate from (R)-pantoate and beta-alanine: step 1/1. In terms of biological role, catalyzes the condensation of pantoate with beta-alanine in an ATP-dependent reaction via a pantoyl-adenylate intermediate. This chain is Pantothenate synthetase, found in Burkholderia mallei (strain NCTC 10229).